Consider the following 61-residue polypeptide: Small ribosomal subunit protein uS14 (61 aa).

The segment covering 1–12 (MSESETTDEPDS) has biased composition (acidic residues). Residues 1-25 (MSESETTDEPDSETASSERTGQLES) are disordered. 4 residues coordinate Zn(2+): cysteine 26, cysteine 29, cysteine 44, and cysteine 47.

The protein belongs to the universal ribosomal protein uS14 family. Zinc-binding uS14 subfamily. As to quaternary structure, part of the 30S ribosomal subunit. The cofactor is Zn(2+).

Functionally, binds 16S rRNA, required for the assembly of 30S particles. The chain is Small ribosomal subunit protein uS14 from Haloarcula marismortui (strain ATCC 43049 / DSM 3752 / JCM 8966 / VKM B-1809) (Halobacterium marismortui).